The chain runs to 380 residues: Cytochrome b (380 aa).

Transmembrane regions (helical) follow at residues 34-54 (FGSLLGICLLTQILTGLLLAT), 78-99 (WLIRNLHANGASFFFICIYLHI), 114-134 (WNTGVILLLALMATAFVGYVL), and 179-199 (FFALHFLLPFMIAGLAFIHLT). Heme b is bound by residues histidine 84 and histidine 98. 2 residues coordinate heme b: histidine 183 and histidine 197. Histidine 202 is a binding site for a ubiquinone. The next 4 helical transmembrane spans lie at 227–247 (LKDILGFIIMFLPLTTLALFS), 289–309 (LGGVLALAASVLVLFLTPLLH), 321–341 (LSQLLFWTLVANLLILTWVGS), and 348–368 (FIIIGQLASLTYFTILLLLFP).

Belongs to the cytochrome b family. The cytochrome bc1 complex contains 11 subunits: 3 respiratory subunits (MT-CYB, CYC1 and UQCRFS1), 2 core proteins (UQCRC1 and UQCRC2) and 6 low-molecular weight proteins (UQCRH/QCR6, UQCRB/QCR7, UQCRQ/QCR8, UQCR10/QCR9, UQCR11/QCR10 and a cleavage product of UQCRFS1). This cytochrome bc1 complex then forms a dimer. It depends on heme b as a cofactor.

It is found in the mitochondrion inner membrane. In terms of biological role, component of the ubiquinol-cytochrome c reductase complex (complex III or cytochrome b-c1 complex) that is part of the mitochondrial respiratory chain. The b-c1 complex mediates electron transfer from ubiquinol to cytochrome c. Contributes to the generation of a proton gradient across the mitochondrial membrane that is then used for ATP synthesis. The sequence is that of Cytochrome b (MT-CYB) from Uria aalge (Common mure).